We begin with the raw amino-acid sequence, 264 residues long: Thymidylate synthase (264 aa).

Residue Arg-21 participates in dUMP binding. A (6R)-5,10-methylene-5,6,7,8-tetrahydrofolate-binding site is contributed by His-51. 126 to 127 (RR) is a dUMP binding site. Catalysis depends on Cys-146, which acts as the Nucleophile. Residues 166 to 169 (RSAD), Asn-177, and 207 to 209 (HLY) each bind dUMP. Asp-169 serves as a coordination point for (6R)-5,10-methylene-5,6,7,8-tetrahydrofolate. Residue Ala-263 coordinates (6R)-5,10-methylene-5,6,7,8-tetrahydrofolate.

Belongs to the thymidylate synthase family. Bacterial-type ThyA subfamily. In terms of assembly, homodimer.

The protein localises to the cytoplasm. It carries out the reaction dUMP + (6R)-5,10-methylene-5,6,7,8-tetrahydrofolate = 7,8-dihydrofolate + dTMP. The protein operates within pyrimidine metabolism; dTTP biosynthesis. Functionally, catalyzes the reductive methylation of 2'-deoxyuridine-5'-monophosphate (dUMP) to 2'-deoxythymidine-5'-monophosphate (dTMP) while utilizing 5,10-methylenetetrahydrofolate (mTHF) as the methyl donor and reductant in the reaction, yielding dihydrofolate (DHF) as a by-product. This enzymatic reaction provides an intracellular de novo source of dTMP, an essential precursor for DNA biosynthesis. The polypeptide is Thymidylate synthase (Nitrosomonas eutropha (strain DSM 101675 / C91 / Nm57)).